A 166-amino-acid polypeptide reads, in one-letter code: NADPH-dependent 7-cyano-7-deazaguanine reductase (166 aa).

Cys-57 functions as the Thioimide intermediate in the catalytic mechanism. The active-site Proton donor is Asp-64. Substrate-binding positions include 79-81 (VES) and 98-99 (HE).

It belongs to the GTP cyclohydrolase I family. QueF type 1 subfamily.

Its subcellular location is the cytoplasm. It catalyses the reaction 7-aminomethyl-7-carbaguanine + 2 NADP(+) = 7-cyano-7-deazaguanine + 2 NADPH + 3 H(+). It participates in tRNA modification; tRNA-queuosine biosynthesis. Its function is as follows. Catalyzes the NADPH-dependent reduction of 7-cyano-7-deazaguanine (preQ0) to 7-aminomethyl-7-deazaguanine (preQ1). This chain is NADPH-dependent 7-cyano-7-deazaguanine reductase, found in Staphylococcus saprophyticus subsp. saprophyticus (strain ATCC 15305 / DSM 20229 / NCIMB 8711 / NCTC 7292 / S-41).